An 83-amino-acid chain; its full sequence is Small ribosomal subunit protein bS16 (83 aa).

It belongs to the bacterial ribosomal protein bS16 family.

The polypeptide is Small ribosomal subunit protein bS16 (Shewanella putrefaciens (strain CN-32 / ATCC BAA-453)).